The primary structure comprises 1123 residues: Probable serine/threonine-protein kinase nek3 (1123 aa).

Residues 4–264 (YEEIKTIGKG…VNDILELPFI (261 aa)) enclose the Protein kinase domain. ATP is bound by residues 10–18 (IGKGSFGRA) and Lys33. The active-site Proton acceptor is Asp130. 2 stretches are compositionally biased toward low complexity: residues 283-307 (NNDSLNISNNSSGSNNSASNNISSS) and 327-415 (NNNN…TSLK). Disordered regions lie at residues 283-310 (NNDSLNISNNSSGSNNSASNNISSSTEV), 325-415 (NINN…TSLK), 440-802 (SKTP…TNSQ), 866-887 (SASTASTASTTNTTLTSGTNTM), 908-937 (SVKLSSKSSSPIKTSSSSSSSSSSSSSITD), and 990-1020 (SLNNSLTSSSSSIITNQNNQNNQNNQNNQNN). Residues 440-459 (SKTPISGTKNPTTSKITPSI) are compositionally biased toward polar residues. Low complexity-rich tracts occupy residues 478–529 (SKPT…SSSV), 557–576 (SNLSSQISSSSSSSSSSNSQ), 588–617 (SPTSTSTKSPTNPSPTLSSSSSLPKSSLKS), and 642–653 (NGNSNVNSTVLN). The segment covering 654-665 (RSVSSLSIQHKP) has biased composition (polar residues). 3 stretches are compositionally biased toward low complexity: residues 666–696 (TNSGSSSISSSSSGNNSNSNTTTNNNTTSTT), 712–738 (STPTSISTSNKSTTTTPTSSRSNTPST), and 752–802 (SSNG…TNSQ). Low complexity predominate over residues 908-935 (SVKLSSKSSSPIKTSSSSSSSSSSSSSI).

It belongs to the protein kinase superfamily. NEK Ser/Thr protein kinase family. NIMA subfamily.

The enzyme catalyses L-seryl-[protein] + ATP = O-phospho-L-seryl-[protein] + ADP + H(+). It catalyses the reaction L-threonyl-[protein] + ATP = O-phospho-L-threonyl-[protein] + ADP + H(+). This chain is Probable serine/threonine-protein kinase nek3 (nek3), found in Dictyostelium discoideum (Social amoeba).